A 196-amino-acid polypeptide reads, in one-letter code: DPQKEELIEHSLNKQTGSNFGQKTELEKVWVDTSSEDISNSYFEIKPLNLSGSREKSLFKTLKEDRLDAKSAQENLNILKEIQQQIIKNVSQKKQAPLNELYLKDLENISNQLGNSEPIKLSEIEKKQEPIERKTSTTTNTESNQEKPLRLGNKTIQLKDGTILKGNAMQYGSQYILEENEKKRIIESTNIESISF.

The segment covering 122–135 (SEIEKKQEPIERKT) has biased composition (basic and acidic residues). The segment at 122 to 150 (SEIEKKQEPIERKTSTTTNTESNQEKPLR) is disordered.

This is an uncharacterized protein from Leptospira interrogans.